Here is a 317-residue protein sequence, read N- to C-terminus: Transaldolase (317 aa).

K126 functions as the Schiff-base intermediate with substrate in the catalytic mechanism.

It belongs to the transaldolase family. Type 1 subfamily. In terms of assembly, homodimer.

It localises to the cytoplasm. The catalysed reaction is D-sedoheptulose 7-phosphate + D-glyceraldehyde 3-phosphate = D-erythrose 4-phosphate + beta-D-fructose 6-phosphate. It participates in carbohydrate degradation; pentose phosphate pathway; D-glyceraldehyde 3-phosphate and beta-D-fructose 6-phosphate from D-ribose 5-phosphate and D-xylulose 5-phosphate (non-oxidative stage): step 2/3. Its function is as follows. Transaldolase is important for the balance of metabolites in the pentose-phosphate pathway. This Burkholderia lata (strain ATCC 17760 / DSM 23089 / LMG 22485 / NCIMB 9086 / R18194 / 383) protein is Transaldolase.